A 516-amino-acid chain; its full sequence is L-amino-acid oxidase (516 aa).

The N-terminal stretch at 1 to 18 (MNVFFMFSLLFLAALGSC) is a signal peptide. An intrachain disulfide couples Cys-28 to Cys-191. FAD is bound by residues 61-62 (MS), 81-82 (EA), Arg-89, and 105-108 (GPMR). Arg-108 provides a ligand contact to substrate. N-linked (GlcNAc...) asparagine glycosylation is present at Asn-190. His-241 lines the substrate pocket. Residue Val-279 participates in FAD binding. A disulfide bond links Cys-349 and Cys-430. Asn-379 carries N-linked (GlcNAc...) asparagine glycosylation. Tyr-390 contributes to the substrate binding site. FAD is bound by residues Glu-475, 481–486 (HGWIDS), and 482–487 (GWIDSS). Substrate is bound by residues 481–482 (HG) and 482–483 (GW).

This sequence belongs to the flavin monoamine oxidase family. FIG1 subfamily. In terms of assembly, homodimer; non-covalently linked. FAD is required as a cofactor. In terms of processing, N-glycosylated. As to expression, expressed by the venom gland.

Its subcellular location is the secreted. It catalyses the reaction an L-alpha-amino acid + O2 + H2O = a 2-oxocarboxylate + H2O2 + NH4(+). In terms of biological role, catalyzes an oxidative deamination of predominantly hydrophobic and aromatic L-amino acids, thus producing hydrogen peroxide that may contribute to the diverse toxic effects of this enzyme. Exhibits diverse biological activities, such as hemorrhage, hemolysis, edema, apoptosis of vascular endothelial cells or tumor cell lines, antibacterial and antiparasitic activities, as well as regulation of platelet aggregation. Effects of snake L-amino oxidases on platelets are controversial, since they either induce aggregation or inhibit agonist-induced aggregation. These different effects are probably due to different experimental conditions. Displays dose-dependent inhibition on HIV-1 infection and replication. The protein is L-amino-acid oxidase of Trimeresurus stejnegeri (Chinese green tree viper).